The chain runs to 654 residues: Glycogen debranching enzyme (654 aa).

The active-site Nucleophile is the Asp-336. The active-site Proton donor is the Glu-371. A disordered region spans residues Glu-459–Gly-484.

This sequence belongs to the glycosyl hydrolase 13 family.

It catalyses the reaction Hydrolysis of (1-&gt;6)-alpha-D-glucosidic linkages to branches with degrees of polymerization of three or four glucose residues in limit dextrin.. It participates in glycan degradation; glycogen degradation. Removes maltotriose and maltotetraose chains that are attached by 1,6-alpha-linkage to the limit dextrin main chain, generating a debranched limit dextrin. This is Glycogen debranching enzyme from Salmonella typhi.